We begin with the raw amino-acid sequence, 261 residues long: Transmembrane protein 106A (261 aa).

Over residues 1–10 the composition is skewed to polar residues; that stretch reads MGKAFSQLTS. Positions 1–22 are disordered; sequence MGKAFSQLTSQKDEDKSILPDN. Residues 93-113 form a helical membrane-spanning segment; the sequence is LSVFLAVTICLLIFSLTIFFL.

This sequence belongs to the TMEM106 family.

It is found in the cell membrane. In terms of biological role, activates macrophages and polarizes them into M1-like macrophages through the activation of the MAPK and NF-kappaB signaling pathway. Upon activation, up-regulates the expression of CD80, CD86, CD69 and MHC II on macrophages, and induces the release of pro-inflammatory cytokines such as TNF, IL1B, IL6, CCL2 and nitric oxide. May play a role in inhibition of proliferation and migration. The chain is Transmembrane protein 106A (Tmem106a) from Rattus norvegicus (Rat).